A 338-amino-acid polypeptide reads, in one-letter code: GTPase Obg (338 aa).

In terms of domain architecture, Obg spans 1 to 159 (MKFIDEVTLF…AKLRLELKLM (159 aa)). Residues 160–331 (ADVGLLGLPN…LLDEIARRLW (172 aa)) form the OBG-type G domain. GTP-binding positions include 166 to 173 (GLPNAGKS), 191 to 195 (FTTIK), 213 to 216 (DIPG), 283 to 286 (TKLD), and 312 to 314 (SSA). S173 and T193 together coordinate Mg(2+).

Belongs to the TRAFAC class OBG-HflX-like GTPase superfamily. OBG GTPase family. Monomer. Mg(2+) serves as cofactor.

The protein resides in the cytoplasm. An essential GTPase which binds GTP, GDP and possibly (p)ppGpp with moderate affinity, with high nucleotide exchange rates and a fairly low GTP hydrolysis rate. Plays a role in control of the cell cycle, stress response, ribosome biogenesis and in those bacteria that undergo differentiation, in morphogenesis control. The sequence is that of GTPase Obg from Pelobacter propionicus (strain DSM 2379 / NBRC 103807 / OttBd1).